Here is an 871-residue protein sequence, read N- to C-terminus: Scavenger receptor class F member 2 (871 aa).

Positions 1 to 20 (MEGAGPRGAGPARRRGAGGP) are disordered. The N-terminal stretch at 1-43 (MEGAGPRGAGPARRRGAGGPPSPLLPSLLLLLLLWMLPDTVAP) is a signal peptide. Over 44–441 (QELNPRGRNV…ACHLETNQRK (398 aa)) the chain is Extracellular. 6 EGF-like domains span residues 71–110 (QGDE…ANCD), 122–153 (CKEL…ARCE), 148–182 (WGAR…AQCA), 183–212 (SACY…RSCN), 213–241 (NQCA…ARCD), and 236–270 (FGAR…KYCR). Intrachain disulfides connect Cys75–Cys86, Cys80–Cys98, Cys100–Cys109, Cys126–Cys134, Cys128–Cys141, Cys143–Cys152, Cys156–Cys163, Cys158–Cys170, Cys172–Cys181, Cys185–Cys193, Cys187–Cys200, Cys202–Cys211, Cys215–Cys222, Cys217–Cys229, Cys231–Cys240, Cys244–Cys251, Cys246–Cys258, and Cys260–Cys269. Asn83 carries an N-linked (GlcNAc...) asparagine glycan. 2 N-linked (GlcNAc...) asparagine glycosylation sites follow: Asn310 and Asn365. An EGF-like 7 domain is found at 372–403 (CAFVCADCGSGHCDFQSGRCLCSPGVHGPHCN). 3 disulfides stabilise this stretch: Cys376–Cys384, Cys379–Cys391, and Cys393–Cys402. Asn403 carries N-linked (GlcNAc...) asparagine glycosylation. Residues 442–462 (GVMGAGALLVLLVCLLLSLLG) traverse the membrane as a helical segment. The Cytoplasmic segment spans residues 463 to 871 (CCCACRGKDP…ELGRAGAPTL (409 aa)). Position 551 is a phosphoserine (Ser551). Positions 570-579 (EAPAESRDPE) are enriched in basic and acidic residues. The interval 570–871 (EAPAESRDPE…ELGRAGAPTL (302 aa)) is disordered. A Phosphoserine modification is found at Ser613. At Tyr628 the chain carries Phosphotyrosine. Over residues 632–643 (ARREARPARARG) the composition is skewed to basic and acidic residues. Residues Ser651, Ser653, Ser710, Ser718, and Ser742 each carry the phosphoserine modification. The span at 705–725 (TPSDKSAHTVEHGSPRTRDPT) shows a compositional bias: basic and acidic residues. Residues 821–831 (PPATETPGPEK) show a composition bias toward low complexity. A compositionally biased stretch (basic residues) spans 844–856 (KKTPIQKPPRKKS). Positions 861-871 (GELGRAGAPTL) are enriched in low complexity.

As to quaternary structure, homophilic and heterophilic interaction via its extracellular domain. Interacts with SCARF1. The heterophilic interaction with SCARF1, which is stronger than the homophilic interaction with itself, is suppressed by the presence of SCARF1 ligand such as Ac-LDL. As to expression, predominantly expressed in endothelial cells. Expressed in heart, placenta, lung, kidney, spleen, small intestine and ovary.

It localises to the membrane. In terms of biological role, probable adhesion protein, which mediates homophilic and heterophilic interactions. In contrast to SCARF1, it poorly mediates the binding and degradation of acetylated low density lipoprotein (Ac-LDL). The sequence is that of Scavenger receptor class F member 2 (SCARF2) from Homo sapiens (Human).